The following is a 353-amino-acid chain: RNA 3'-terminal phosphate cyclase (353 aa).

ATP-binding positions include glutamine 100 and 289-292 (HMSD). Residue histidine 315 is the Tele-AMP-histidine intermediate of the active site.

The protein belongs to the RNA 3'-terminal cyclase family. Type 1 subfamily.

It is found in the cytoplasm. The enzyme catalyses a 3'-end 3'-phospho-ribonucleotide-RNA + ATP = a 3'-end 2',3'-cyclophospho-ribonucleotide-RNA + AMP + diphosphate. Catalyzes the conversion of 3'-phosphate to a 2',3'-cyclic phosphodiester at the end of RNA. The mechanism of action of the enzyme occurs in 3 steps: (A) adenylation of the enzyme by ATP; (B) transfer of adenylate to an RNA-N3'P to produce RNA-N3'PP5'A; (C) and attack of the adjacent 2'-hydroxyl on the 3'-phosphorus in the diester linkage to produce the cyclic end product. The biological role of this enzyme is unknown but it is likely to function in some aspects of cellular RNA processing. This is RNA 3'-terminal phosphate cyclase from Ignicoccus hospitalis (strain KIN4/I / DSM 18386 / JCM 14125).